Consider the following 311-residue polypeptide: Putative S-adenosyl-L-methionine-dependent methyltransferase MRA_0152 (311 aa).

S-adenosyl-L-methionine-binding positions include Asp135 and 164–165; that span reads DL.

The protein belongs to the UPF0677 family.

In terms of biological role, exhibits S-adenosyl-L-methionine-dependent methyltransferase activity. This chain is Putative S-adenosyl-L-methionine-dependent methyltransferase MRA_0152, found in Mycobacterium tuberculosis (strain ATCC 25177 / H37Ra).